A 64-amino-acid polypeptide reads, in one-letter code: Temporin-ALd (64 aa).

Residues 1–22 (MFTMKKSLLLLFFLGTIHLSLC) form the signal peptide. The propeptide occupies 23–46 (EQERNAEEERRDDLGERQAEVEKR). Leu62 carries the post-translational modification Leucine amide.

As to expression, expressed by the skin glands.

It localises to the secreted. Antimicrobial peptide with activity against Gram-positive and Gram-negative bacteria and against fungi. Has been tested against S.aureus (MIC=1.25 ug/mL), B.pumilus (MIC=2.5 ug/mL), B.cereus (MIC=15.0 ug/mL), E.coli (MIC=1.25 ug/mL), B.dysenteriae (MIC=5.0 ug/mL), A.cacoaceticus (MIC=15.0 ug/mL), P.aeruginosa (MIC=5.0 ug/mL) and C.albicans (MIC=1.25 ug/mL). Also shows a weak hemolytic activity. This is Temporin-ALd from Amolops loloensis (Lolokou Sucker Frog).